The following is a 543-amino-acid chain: CTP synthase (543 aa).

An amidoligase domain region spans residues 1 to 265 (MARYIFITGG…DEEVLAAFGI (265 aa)). Ser-13 contacts CTP. Residue Ser-13 coordinates UTP. 14–19 (SLGKGL) serves as a coordination point for ATP. Position 54 (Tyr-54) interacts with L-glutamine. Asp-71 is an ATP binding site. Mg(2+) is bound by residues Asp-71 and Glu-139. CTP contacts are provided by residues 146–148 (DIE), 186–191 (KTKPTQ), and Lys-222. Residues 186–191 (KTKPTQ) and Lys-222 each bind UTP. 238–240 (RDA) serves as a coordination point for ATP. The 252-residue stretch at 291–542 (TIAIVGKYTG…IEAAMAQSRL (252 aa)) folds into the Glutamine amidotransferase type-1 domain. Gly-353 contacts L-glutamine. Cys-380 acts as the Nucleophile; for glutamine hydrolysis in catalysis. Residues 381 to 384 (FGMQ), Glu-404, and Arg-470 each bind L-glutamine. Catalysis depends on residues His-515 and Glu-517.

Belongs to the CTP synthase family. In terms of assembly, homotetramer.

The enzyme catalyses UTP + L-glutamine + ATP + H2O = CTP + L-glutamate + ADP + phosphate + 2 H(+). It catalyses the reaction L-glutamine + H2O = L-glutamate + NH4(+). It carries out the reaction UTP + NH4(+) + ATP = CTP + ADP + phosphate + 2 H(+). It participates in pyrimidine metabolism; CTP biosynthesis via de novo pathway; CTP from UDP: step 2/2. Its activity is regulated as follows. Allosterically activated by GTP, when glutamine is the substrate; GTP has no effect on the reaction when ammonia is the substrate. The allosteric effector GTP functions by stabilizing the protein conformation that binds the tetrahedral intermediate(s) formed during glutamine hydrolysis. Inhibited by the product CTP, via allosteric rather than competitive inhibition. Catalyzes the ATP-dependent amination of UTP to CTP with either L-glutamine or ammonia as the source of nitrogen. Regulates intracellular CTP levels through interactions with the four ribonucleotide triphosphates. In Rhodopseudomonas palustris (strain BisA53), this protein is CTP synthase.